Consider the following 1801-residue polypeptide: Laminin subunit beta-2 (1801 aa).

The N-terminal stretch at 1–35 is a signal peptide; the sequence is MEWASGKPGRGRQGQPVPWELRLGLLLSVLAATLA. The Laminin N-terminal domain occupies 46–285; sequence SRGSCYPATG…ALYELVIRGN (240 aa). Asn251 carries N-linked (GlcNAc...) asparagine glycosylation. Cystine bridges form between Cys286–Cys295, Cys288–Cys313, Cys315–Cys324, Cys327–Cys347, Cys350–Cys359, Cys352–Cys377, Cys380–Cys389, Cys392–Cys410, Cys413–Cys426, Cys415–Cys441, Cys443–Cys452, Cys455–Cys470, Cys473–Cys487, Cys475–Cys494, Cys496–Cys505, Cys508–Cys522, Cys525–Cys537, Cys527–Cys544, and Cys546–Cys555. Laminin EGF-like domains lie at 286 to 349, 350 to 412, 413 to 472, and 473 to 524; these read CFCY…ACRK, CECN…ACRP, CDCD…GCQR, and CQCN…GCRP. Asn371 carries N-linked (GlcNAc...) asparagine glycosylation. The Laminin EGF-like 5; truncated domain maps to 525–555; sequence CDCDVGGALDPQCDEATGQCPCRPHMIGRRC. One can recognise a Laminin IV type B domain in the interval 564 to 780; that stretch reads RPFLDHLTWE…LLISASSLVY (217 aa). Disulfide bonds link Cys786/Cys798, Cys788/Cys805, Cys807/Cys816, Cys819/Cys831, Cys834/Cys846, Cys836/Cys853, Cys855/Cys864, Cys867/Cys877, Cys880/Cys889, Cys882/Cys896, Cys899/Cys908, Cys911/Cys927, Cys930/Cys946, Cys932/Cys957, Cys959/Cys968, Cys971/Cys986, Cys989/Cys1003, Cys991/Cys1010, Cys1013/Cys1022, Cys1025/Cys1038, Cys1041/Cys1061, Cys1043/Cys1068, Cys1070/Cys1079, Cys1082/Cys1095, Cys1098/Cys1110, Cys1100/Cys1117, Cys1119/Cys1128, Cys1131/Cys1143, Cys1146/Cys1158, Cys1148/Cys1165, Cys1167/Cys1176, and Cys1179/Cys1190. 8 Laminin EGF-like domains span residues 786 to 833, 834 to 879, 880 to 929, 930 to 988, 989 to 1040, 1041 to 1097, 1098 to 1145, and 1146 to 1192; these read CQCD…GCQA, CQCS…NCRP, CVCN…QCRP, CPCP…RCQL, CECS…SCHR, CTCN…GCQP, CACH…QCRA, and CDCD…ACHP. Asn1088 carries N-linked (GlcNAc...) asparagine glycosylation. A domain II region spans residues 1193 to 1412; sequence CHACFGDWDR…LSLTGVNELV (220 aa). N-linked (GlcNAc...) asparagine glycosylation occurs at Asn1252. Positions 1259–1306 form a coiled coil; sequence AKLVEATEGLRHEIGKTTERLTQLEAELTDVQDENFNANHALSGLERD. Asn1311 and Asn1351 each carry an N-linked (GlcNAc...) asparagine glycan. The domain alpha stretch occupies residues 1413 to 1445; sequence CGAPGDAPCATSPCGGAGCRDEDGQPRCGGLGC. The segment at 1446–1801 is domain I; that stretch reads SGAAATADLA…LQVQIYNTCQ (356 aa). A coiled-coil region spans residues 1475-1529; that stretch reads GILSRVSETRRQAEEAQQRAQAALDKANASRGQVEQANQELRELIQNVKDFLSQE. N-linked (GlcNAc...) asparagine glycosylation occurs at Asn1502. A Phosphoserine modification is found at Ser1535. Positions 1576 to 1793 form a coiled coil; sequence LAHTMGDVRR…RSVLQAINLQ (218 aa). The segment covering 1684–1694 has biased composition (low complexity); sequence ASTAEETAGSA. Residues 1684–1703 are disordered; the sequence is ASTAEETAGSAQSRAREAEK.

Laminin is a complex glycoprotein, consisting of three different polypeptide chains (alpha, beta, gamma), which are bound to each other by disulfide bonds into a cross-shaped molecule comprising one long and three short arms with globules at each end. Beta-2 is a subunit of laminin-3 (laminin-121 or S-laminin), laminin-4 (laminin-221 or S-merosin), laminin-7 (laminin-321 or KS-laminin), laminin-9 (laminin-421), laminin-11 (laminin-521), laminin-14 (laminin-423) and laminin-15 (laminin-523). Found in the basement membranes (major component). S-laminin is concentrated in the synaptic cleft of the neuromuscular junction.

It localises to the secreted. The protein localises to the extracellular space. It is found in the extracellular matrix. The protein resides in the basement membrane. In terms of biological role, binding to cells via a high affinity receptor, laminin is thought to mediate the attachment, migration and organization of cells into tissues during embryonic development by interacting with other extracellular matrix components. The protein is Laminin subunit beta-2 (Lamb2) of Rattus norvegicus (Rat).